Here is a 141-residue protein sequence, read N- to C-terminus: Hemoglobin subunit alpha-A (141 aa).

The Globin domain occupies 1–141 (VLSGTDKTNV…VGAVLTAKYR (141 aa)). O2 is bound at residue His58. His87 contributes to the heme b binding site.

The protein belongs to the globin family. As to quaternary structure, heterotetramer of two alpha chains and two beta chains. As to expression, red blood cells.

In terms of biological role, involved in oxygen transport from the lung to the various peripheral tissues. In Struthio camelus (Common ostrich), this protein is Hemoglobin subunit alpha-A (HBAA).